We begin with the raw amino-acid sequence, 23 residues long: Laccase-1 (23 aa).

This sequence belongs to the multicopper oxidase family. Requires Cu cation as cofactor.

It is found in the secreted. It catalyses the reaction 4 hydroquinone + O2 = 4 benzosemiquinone + 2 H2O. Its activity is regulated as follows. Strongly inhibited by sodium azide, sodium cyanide, Li(+), Sn(+), Hg(2+), and the disulfide-reducing agents beta-mercaptoethanol, dithiothreitol and thioglycolic acid. Moderately inhibited by Mn(2+) and Fe(2+), inhibition by these metal ions is stronger at 0.1 mM than at 1 mM. Moderately inhibited by Cu(2+). Lignin degradation and detoxification of lignin-derived products. Demethylates eucalyptus hard wood lignin. Has high activity against the non-phenolic heterocyclic compound ABTS, and lower activity against the phenolic substrates syringic acid, caffeic acid, syringaldazine, vanillic acid, catechol and levodihydroxyphenylalanine. The chain is Laccase-1 from Galerina sp.